The following is a 642-amino-acid chain: Threonine--tRNA ligase (642 aa).

The 61-residue stretch at Met1 to Thr61 folds into the TGS domain. The catalytic stretch occupies residues Asp243–Pro534. The Zn(2+) site is built by Cys334, His385, and His511.

The protein belongs to the class-II aminoacyl-tRNA synthetase family. As to quaternary structure, homodimer. Requires Zn(2+) as cofactor.

It is found in the cytoplasm. The catalysed reaction is tRNA(Thr) + L-threonine + ATP = L-threonyl-tRNA(Thr) + AMP + diphosphate + H(+). In terms of biological role, catalyzes the attachment of threonine to tRNA(Thr) in a two-step reaction: L-threonine is first activated by ATP to form Thr-AMP and then transferred to the acceptor end of tRNA(Thr). Also edits incorrectly charged L-seryl-tRNA(Thr). This is Threonine--tRNA ligase from Shewanella oneidensis (strain ATCC 700550 / JCM 31522 / CIP 106686 / LMG 19005 / NCIMB 14063 / MR-1).